Reading from the N-terminus, the 55-residue chain is Lantibiotic nisin-U (55 aa).

The propeptide occupies 1–24; sequence MNNEDFNLDLIKISKENNSGASPR. 2,3-didehydrobutyrine is present on Thr26. The lanthionine (Ser-Cys) cross-link spans 27–31; it reads SKSLC. Position 29 is a 2,3-didehydroalanine (Ser) (Ser29). 4 cross-links (beta-methyllanthionine (Thr-Cys)) span residues 32-35, 37-43, 47-50, and 49-52; these read TPGC, TGILMTC, TATC, and TCGC. Thr42 bears the 2,3-didehydrobutyrine mark.

In terms of processing, maturation of lantibiotics involves the enzymatic conversion of Thr, and Ser into dehydrated AA and the formation of thioether bonds with cysteine. This is followed by membrane translocation and cleavage of the modified precursor.

The protein resides in the secreted. Lanthionine-containing peptide antibiotic (lantibiotic) active on Gram-positive bacteria. The bactericidal activity of lantibiotics is based on depolarization of energized bacterial cytoplasmic membranes, initiated by the formation of aqueous transmembrane pores. This chain is Lantibiotic nisin-U (nsuA), found in Streptococcus uberis.